The chain runs to 754 residues: Zinc finger protein with KRAB and SCAN domains 7 (754 aa).

Lys-28 is covalently cross-linked (Glycyl lysine isopeptide (Lys-Gly) (interchain with G-Cter in SUMO2)). One can recognise an SCAN box domain in the interval Arg-54 to Leu-136. The segment at Thr-157 to Asp-215 is disordered. Composition is skewed to polar residues over residues Ala-158 to Ser-172 and Gln-199 to Asp-215. In terms of domain architecture, KRAB spans Val-231–Pro-306. C2H2-type zinc fingers lie at residues Tyr-383–His-405, Tyr-411–His-433, Tyr-439–His-461, Tyr-467–His-489, Tyr-495–His-517, Tyr-523–His-545, Tyr-551–His-573, Tyr-579–His-601, Phe-607–His-629, and Tyr-635–His-657. The segment at Tyr-663–His-685 adopts a C2H2-type 11; degenerate zinc-finger fold. C2H2-type zinc fingers lie at residues Tyr-691–His-713 and Tyr-719–His-741. The disordered stretch occupies residues Asn-735–Ser-754.

It belongs to the krueppel C2H2-type zinc-finger protein family.

Its subcellular location is the nucleus. Functionally, may be involved in transcriptional regulation. In Homo sapiens (Human), this protein is Zinc finger protein with KRAB and SCAN domains 7 (ZKSCAN7).